The sequence spans 108 residues: Nucleoid-associated protein PLES_37951 (108 aa).

2 disordered regions span residues 1–25 (MMKG…KMQE) and 87–108 (NQEK…KMPF). A compositionally biased stretch (polar residues) spans 87–98 (NQEKMSGFTSGM).

Belongs to the YbaB/EbfC family. Homodimer.

The protein resides in the cytoplasm. Its subcellular location is the nucleoid. Binds to DNA and alters its conformation. May be involved in regulation of gene expression, nucleoid organization and DNA protection. The chain is Nucleoid-associated protein PLES_37951 from Pseudomonas aeruginosa (strain LESB58).